The chain runs to 338 residues: MAGSHPYFNQPDSTHPSPPSAPPSLRWYQRCQPSDATSGLLVALLGGGLPAGFVGPLSRMAYQASNLPSLELLIWRCLFHLPIALLLKLRGDPLLGTPDIRSRAFFCALLNILSIGCAYSAVQVVPAGNAATVRKGSSTVCSAVLTLCLESQGLSGYDWCGLLGCILGLIIIVGPGLWTLQEGTTGVYTALGYVEAFLGGLALSLRLLVYRSLHFPPCLPTVAFLSGLVGLLGSVPGLFVLQAPVLPSDLLSWSCVGAVGILALVSFTCVGYAVTKAHPALVCAVLHSEVVVALILQYYMLHETVAPSDIVAAGVVLGSIAIITAQNLSCERTGRVEE.

Positions 1 to 24 (MAGSHPYFNQPDSTHPSPPSAPPS) are disordered. Transmembrane regions (helical) follow at residues 37–57 (TSGLLVALLGGGLPAGFVGPL), 67–87 (LPSLELLIWRCLFHLPIALLL), 105–125 (FFCALLNILSIGCAYSAVQVV), 160–180 (CGLLGCILGLIIIVGPGLWTL), 185–205 (TGVYTALGYVEAFLGGLALSL), 221–241 (TVAFLSGLVGLLGSVPGLFVL), 250–270 (LLSWSCVGAVGILALVSFTCV), 281–301 (LVCAVLHSEVVVALILQYYML), and 305–325 (VAPSDIVAAGVVLGSIAIITA). The EamA 1 domain occupies 49–174 (LPAGFVGPLS…CILGLIIIVG (126 aa)). The EamA 2 domain maps to 272-325 (YAVTKAHPALVCAVLHSEVVVALILQYYMLHETVAPSDIVAAGVVLGSIAIITA).

Belongs to the SLC35G solute transporter family. In terms of tissue distribution, expressed in testis.

The protein resides in the membrane. In Homo sapiens (Human), this protein is Solute carrier family 35 member G3 (SLC35G3).